The primary structure comprises 547 residues: Chaperonin GroEL (547 aa).

Residues Thr30 to Pro33, Lys51, Asp87 to Thr91, Gly415, and Asp496 each bind ATP. Residues Lys528 to Phe547 form a disordered region.

It belongs to the chaperonin (HSP60) family. In terms of assembly, forms a cylinder of 14 subunits composed of two heptameric rings stacked back-to-back. Interacts with the co-chaperonin GroES.

It localises to the cytoplasm. It carries out the reaction ATP + H2O + a folded polypeptide = ADP + phosphate + an unfolded polypeptide.. Together with its co-chaperonin GroES, plays an essential role in assisting protein folding. The GroEL-GroES system forms a nano-cage that allows encapsulation of the non-native substrate proteins and provides a physical environment optimized to promote and accelerate protein folding. In Caulobacter vibrioides (strain ATCC 19089 / CIP 103742 / CB 15) (Caulobacter crescentus), this protein is Chaperonin GroEL.